Here is a 112-residue protein sequence, read N- to C-terminus: MWDPLLNEFPESVHGFRCMLAVKYLQLVECTYSPDTLGYDLIRDLFSVIRAKNYVEATSRYHNFYSRLEGSSPSELRQPIQQPCGCPYCPRHKKTILDKQTHQSEAQVVSDV.

It belongs to the geminiviridae protein AV2/V2 family. Interacts with host SGS3.

The protein resides in the host cytoplasm. Its subcellular location is the host perinuclear region. Its function is as follows. Through its interaction with host SGS3, acts as a suppressor of RNA-mediated gene silencing, also known as post-transcriptional gene silencing (PTGS), a mechanism of plant viral defense that limits the accumulation of viral RNAs. The sequence is that of Protein AV2 from Indian cassava mosaic virus (ICMV).